A 592-amino-acid chain; its full sequence is Inactive heparanase-2 (592 aa).

The signal sequence occupies residues 1–41; that stretch reads MRVLCAFPEAMPSSNSRPPACLAPGALYLALLLHLSLSSQA. Residues Asn-254 and Asn-392 are each glycosylated (N-linked (GlcNAc...) asparagine).

Belongs to the glycosyl hydrolase 79 family. In terms of assembly, interacts with HPSE. Interacts with SDC1 (via glycan chains). As to expression, widely expressed, with the highest expression in brain, mammary gland, prostate, small intestine, testis and uterus. In the central nervous system, expressed in the spinal cord, caudate nucleus, thalamus, substantia nigra, medulla oblongata, putamen and pons. In the urinary bladder, expressed in longitudinal and circular layers of detrusor muscle. Found both in normal and cancer tissues.

The protein resides in the secreted. Its subcellular location is the extracellular space. It localises to the extracellular matrix. In terms of biological role, binds heparin and heparan sulfate with high affinity, but lacks heparanase activity. Inhibits HPSE, possibly by competing for its substrates (in vitro). The chain is Inactive heparanase-2 (HPSE2) from Homo sapiens (Human).